A 600-amino-acid polypeptide reads, in one-letter code: Phosphoenolpyruvate carboxykinase (ATP) (600 aa).

An ATP-binding site is contributed by 302–309 (GLSGTGKT).

It belongs to the phosphoenolpyruvate carboxykinase (ATP) family.

It catalyses the reaction oxaloacetate + ATP = phosphoenolpyruvate + ADP + CO2. It participates in carbohydrate biosynthesis; gluconeogenesis. This Emericella nidulans (strain FGSC A4 / ATCC 38163 / CBS 112.46 / NRRL 194 / M139) (Aspergillus nidulans) protein is Phosphoenolpyruvate carboxykinase (ATP) (acuF).